Reading from the N-terminus, the 127-residue chain is Small ribosomal subunit protein uS12 (127 aa).

Residues 8–28 form a disordered region; it reads IRTEREKARQKTKSPALKQCP. Position 89 is a 3-methylthioaspartic acid (Asp89). The segment at 102-127 is disordered; that stretch reads LDTAGVKDRKQGRSKYGTKRPKEAKK. Basic residues predominate over residues 113 to 127; sequence GRSKYGTKRPKEAKK.

The protein belongs to the universal ribosomal protein uS12 family. As to quaternary structure, part of the 30S ribosomal subunit. Contacts proteins S8 and S17. May interact with IF1 in the 30S initiation complex.

In terms of biological role, with S4 and S5 plays an important role in translational accuracy. Functionally, interacts with and stabilizes bases of the 16S rRNA that are involved in tRNA selection in the A site and with the mRNA backbone. Located at the interface of the 30S and 50S subunits, it traverses the body of the 30S subunit contacting proteins on the other side and probably holding the rRNA structure together. The combined cluster of proteins S8, S12 and S17 appears to hold together the shoulder and platform of the 30S subunit. This is Small ribosomal subunit protein uS12 from Nostoc sp. (strain PCC 7120 / SAG 25.82 / UTEX 2576).